Reading from the N-terminus, the 2737-residue chain is Non-reducing polyketide synthase ATEG_07661 (2737 aa).

An N-terminal acylcarrier protein transacylase domain (SAT) region spans residues 75 to 245 (SRSLAELDSW…VRYDQTRATV (171 aa)). Cysteine 154 functions as the Nucleophile; for transacylase activity in the catalytic mechanism. Residue histidine 276 is the Proton donor/acceptor; for transacylase activity of the active site. The Ketosynthase family 3 (KS3) domain maps to 427–854 (NEAIAIVGMS…GSNASMIITE (428 aa)). Residues cysteine 603, histidine 738, and histidine 777 each act as for beta-ketoacyl synthase activity in the active site. The tract at residues 969–1260 (FGGQVSRFVG…IMASRAIAQS (292 aa)) is malonyl-CoA:ACP transacylase (MAT). The interval 1368 to 1503 (LQSLWNFVEF…ASVEMRAPTD (136 aa)) is N-terminal hotdog fold. One can recognise a PKS/mFAS DH domain in the interval 1368–1683 (LQSLWNFVEF…YGRVAKASMS (316 aa)). A product template (PT) domain region spans residues 1399–1681 (FVLSHVIAQT…VQYGRVAKAS (283 aa)). Residue histidine 1403 is the Proton acceptor; for dehydratase activity of the active site. The tract at residues 1535 to 1683 (VEVLQGRNVY…YGRVAKASMS (149 aa)) is C-terminal hotdog fold. The Proton donor; for dehydratase activity role is filled by aspartate 1592. The disordered stretch occupies residues 1724–1747 (SRTTKKKAKASKSKSSVKKDKAPS). The span at 1725–1739 (RTTKKKAKASKSKSS) shows a compositional bias: basic residues. A Carrier domain is found at 1750 to 1824 (RDITDEVRNL…KFVACVSNAL (75 aa)). The residue at position 1784 (serine 1784) is an O-(pantetheine 4'-phosphoryl)serine. Positions 1827-1876 (PNQGQSSIDEDDEDDEHSEDSSNESSSAASDEDASSGLESPDTGILTPED) are disordered. Residues 1834–1848 (IDEDDEDDEHSEDSS) show a composition bias toward acidic residues. Low complexity predominate over residues 1849–1866 (NESSSAASDEDASSGLES). The segment at 2094-2270 (ADRIQSSSGS…GFGHVDWTDG (177 aa)) is methyltransferase domain. The tract at residues 2362-2665 (VVLVTGATGS…IPFKDWISRV (304 aa)) is NADPH-binding domain.

Its pathway is secondary metabolite biosynthesis. Non-reducing polyketide synthase; part of the cluster B that mediates the biosynthesis of azasperpyranones, members of the azaphilone family that exhibit anti-cancer activities. Azasperpyranones are synthesized by 2 clusters, A and B. Cluster A is responsible for the production of the polyhydric phenol moiety while the azaphilonoid scaffold is produced by the cluster B. The non-reducing polyketide synthase ATEG_03629 produces 5-methyl orsellinic acid, which is then reduced to 5-methyl orsellinic aldehyde by the NRPS-like protein ATEG_03630. 5-methyl orsellinic aldehyde is then first hydroxylated by the FAD-dependent monooxygenase ATEG_03635 and subsequently hydroxylated by the cytochrome P450 monooxygenase ATEG_03631 to produce the unstable polyhydric phenol precursor of azasperpyranones. On the other hand, the polyketide synthase ATEG_07659 is responsible for producing the 3,5-dimethyloctadienone moiety from acetyl-CoA, three malonyl-CoA, and two S-adenosyl methionines (SAM). The 3,5-dimethyloctadienone moiety is then loaded onto the SAT domain of ATEG_07661 and extended with four malonyl-CoA and one SAM, which leads to the formation of 2,4-dihydroxy-6-(5,7-dimethyl-2-oxo-trans-3-trans-5-nonadienyl)-3-methylbenzaldehyde (compound 8) after reductive release and aldol condensation. The FAD-dependent monooxygenase ATEG_07662 is the next enzyme in the biosynthesis sequence and hydroxylates the side chain at the benzylic position of compound 8. In Aspergillus nidulans, afoF, the ortholog of the FAD-dependent oxygenase ATEG_07660, is the key enzyme for the biosynthesis of asperfuranone by catalyzing the hydroxylation at C-8 of to prevent the formation of a six-membered ring hemiacetal intermediate and thus facilitating the formation of a five-membered ring to produce asperfuranone. In Aspergillus terreus, ATEG_07660 is probably not functional, which leads to the formation of the six-membered ring hemiacetal intermediate presperpyranone instead of asperfuranone. Finally, ATEG_03636 is involved in the condensation of the polyhydric phenol moiety produced by cluster A and the perasperpyranone precursor produced by cluster B, to yield azasperpyranone A. Further modifications of azasperpyranone A result in the production of derivatives, including azasperpyranone B to F. The chain is Non-reducing polyketide synthase ATEG_07661 from Aspergillus terreus (strain NIH 2624 / FGSC A1156).